We begin with the raw amino-acid sequence, 293 residues long: Ribosomal protein L11 methyltransferase (293 aa).

Positions 145, 166, 188, and 230 each coordinate S-adenosyl-L-methionine.

Belongs to the methyltransferase superfamily. PrmA family.

Its subcellular location is the cytoplasm. The catalysed reaction is L-lysyl-[protein] + 3 S-adenosyl-L-methionine = N(6),N(6),N(6)-trimethyl-L-lysyl-[protein] + 3 S-adenosyl-L-homocysteine + 3 H(+). Functionally, methylates ribosomal protein L11. This Escherichia coli (strain 55989 / EAEC) protein is Ribosomal protein L11 methyltransferase.